A 100-amino-acid chain; its full sequence is Large ribosomal subunit protein uL23 (100 aa).

It belongs to the universal ribosomal protein uL23 family. As to quaternary structure, part of the 50S ribosomal subunit. Contacts protein L29, and trigger factor when it is bound to the ribosome.

Its function is as follows. One of the early assembly proteins it binds 23S rRNA. One of the proteins that surrounds the polypeptide exit tunnel on the outside of the ribosome. Forms the main docking site for trigger factor binding to the ribosome. This is Large ribosomal subunit protein uL23 from Synechococcus sp. (strain CC9902).